The primary structure comprises 877 residues: Alanine--tRNA ligase (877 aa).

The Zn(2+) site is built by His-562, His-566, Cys-664, and His-668.

Belongs to the class-II aminoacyl-tRNA synthetase family. Zn(2+) is required as a cofactor.

It localises to the cytoplasm. The enzyme catalyses tRNA(Ala) + L-alanine + ATP = L-alanyl-tRNA(Ala) + AMP + diphosphate. Catalyzes the attachment of alanine to tRNA(Ala) in a two-step reaction: alanine is first activated by ATP to form Ala-AMP and then transferred to the acceptor end of tRNA(Ala). Also edits incorrectly charged Ser-tRNA(Ala) and Gly-tRNA(Ala) via its editing domain. This Synechocystis sp. (strain ATCC 27184 / PCC 6803 / Kazusa) protein is Alanine--tRNA ligase.